A 503-amino-acid polypeptide reads, in one-letter code: Maturase K (503 aa).

Belongs to the intron maturase 2 family. MatK subfamily.

The protein localises to the plastid. It is found in the chloroplast. Usually encoded in the trnK tRNA gene intron. Probably assists in splicing its own and other chloroplast group II introns. The protein is Maturase K of Rubus ursinus (California blackberry).